We begin with the raw amino-acid sequence, 464 residues long: MAVTINTELDPVFLKALGYLHSKSKDSAEKLKALLDESLCKGNDSVYRPQPKEVEQPKAMLSKVKPETKASSSTPSSSILSKPLASEKVKKEAEKRTADKMKVEINDIMDIPKKPRIEKTEARSSPVTVQLSKDLPVPDLSSFEETSADDFAMEMGLACVVCRQMTVFSGNQLVECQECHNLYHQDCHRPQVTDKDVNDPRLVWYCARCTRQMKRMAQKNQKPSQKPAPSAVSAVTPVAKDPSVNKPELKSKSDSANTFLAFKRAEVKASSAVSSNPSNSGVSSSSASGLTGWAAFGAKTASAVPVSGKLGTNSQATSGKPPSLSSVQKAGTVPGLTPSKAGSVSKSGSGGSSSTIPLKPLPPLILGKTGLSRSMSSDNVSKTGLPSPNPSSSGSVSSLSSQLGSNNGSSNTAGSNVNSSNKVAVDPSMQQSGAKGPTSQESQLNAMKRLQMVKKKAAQKKLKK.

The tract at residues Gly-42–Ala-98 is disordered. The segment covering Lys-69–Leu-84 has biased composition (low complexity). A compositionally biased stretch (basic and acidic residues) spans Ala-85 to Ala-98. Residues Gly-156–Gln-212 form a PHD-type zinc finger. 2 disordered regions span residues Met-216–Lys-252 and Thr-312–Asn-445. Positions Pro-227–Ala-239 are enriched in low complexity. Residues Thr-312–Lys-329 are compositionally biased toward polar residues. The segment covering Ser-339–Leu-371 has biased composition (low complexity). Polar residues predominate over residues Ser-372–Lys-382. The span at Gly-384–Asn-421 shows a compositional bias: low complexity. Residues Ser-428–Asn-445 show a composition bias toward polar residues.

It belongs to the Integrator subunit 12 family. Component of the Integrator complex, composed of core subunits INTS1, INTS2, INTS3, INTS4, INTS5, INTS6, INTS7, INTS8, INTS9/RC74, INTS10, INTS11/CPSF3L, INTS12, INTS13, INTS14 and INTS15. The core complex associates with protein phosphatase 2A subunits PPP2CA and PPP2R1A, to form the Integrator-PP2A (INTAC) complex.

The protein localises to the nucleus. Component of the integrator complex, a multiprotein complex that terminates RNA polymerase II (Pol II) transcription in the promoter-proximal region of genes. The integrator complex provides a quality checkpoint during transcription elongation by driving premature transcription termination of transcripts that are unfavorably configured for transcriptional elongation: the complex terminates transcription by (1) catalyzing dephosphorylation of the C-terminal domain (CTD) of Pol II subunit POLR2A/RPB1 and SUPT5H/SPT5, (2) degrading the exiting nascent RNA transcript via endonuclease activity and (3) promoting the release of Pol II from bound DNA. The integrator complex is also involved in terminating the synthesis of non-coding Pol II transcripts, such as enhancer RNAs (eRNAs), small nuclear RNAs (snRNAs), telomerase RNAs and long non-coding RNAs (lncRNAs). This Xenopus laevis (African clawed frog) protein is Integrator complex subunit 12 (ints12).